Here is a 156-residue protein sequence, read N- to C-terminus: Transcription antitermination protein NusB (156 aa).

This sequence belongs to the NusB family.

In terms of biological role, involved in transcription antitermination. Required for transcription of ribosomal RNA (rRNA) genes. Binds specifically to the boxA antiterminator sequence of the ribosomal RNA (rrn) operons. This is Transcription antitermination protein NusB from Clostridium kluyveri (strain ATCC 8527 / DSM 555 / NBRC 12016 / NCIMB 10680 / K1).